The sequence spans 372 residues: Probable NADH-dependent flavin oxidoreductase YqiG (372 aa).

Belongs to the NADH:flavin oxidoreductase/NADH oxidase family.

The chain is Probable NADH-dependent flavin oxidoreductase YqiG (yqiG) from Bacillus subtilis (strain 168).